A 679-amino-acid polypeptide reads, in one-letter code: Methionine--tRNA ligase (679 aa).

Residues 14-24 (PYANGSIHLGH) carry the 'HIGH' region motif. Cysteine 145, cysteine 148, cysteine 158, and cysteine 161 together coordinate Zn(2+). The 'KMSKS' region signature appears at 331-335 (KMSKS). Lysine 334 serves as a coordination point for ATP. Residues 577–679 (TFAAVDLRVA…SGAKPGQRIK (103 aa)) form the tRNA-binding domain.

The protein belongs to the class-I aminoacyl-tRNA synthetase family. MetG type 1 subfamily. As to quaternary structure, homodimer. Zn(2+) is required as a cofactor.

The protein localises to the cytoplasm. It catalyses the reaction tRNA(Met) + L-methionine + ATP = L-methionyl-tRNA(Met) + AMP + diphosphate. In terms of biological role, is required not only for elongation of protein synthesis but also for the initiation of all mRNA translation through initiator tRNA(fMet) aminoacylation. The protein is Methionine--tRNA ligase of Pseudomonas entomophila (strain L48).